Here is a 255-residue protein sequence, read N- to C-terminus: Cullin-like protein 3 (255 aa).

Belongs to the cullin family.

In Arabidopsis thaliana (Mouse-ear cress), this protein is Cullin-like protein 3.